An 835-amino-acid chain; its full sequence is MADIDQYILDDSDIAFEYELQKSPSVEVWQRYIAHWEAQVCEDGVRSARHILWLYERMVTQFPTLTVWEQYIGWFRRQYKLDQYLDTFKLYERCINSVKGPLGVFAVEVMLFCISTFDLDIIMKGLQLVLHRCNKDEVERIWNIVLGFALEHVLPSEEGPNNIDFSAFNDRNYEDLRLDIYKLLFLGGDQTEIEDDEEDEDVDKWTASLLRYYLQVANEDKYDETLRLLIRTKDIKIIKECFDLYIFNDKTGKNNRESKKEYDFDLYIYYLDTLDKLRLDKDYKSVFDNLLEKYPQHRVLLTLKLADFHMKRADFDKMEKVLTKALSETVKTNEFIAIYTYHVNFEQAYVETIFDEMRDDPEIQVQKKWKSEMDDHLIILGDLTSRYHLLVNDLKIRQNPNSVSNWLERTTLFEDFDKKCEVFVEAIKTIDPIKVKDKEYGMLGKLWCDYAKVYWSNKSYEEARTIYESATKVPFPDLQDLEIVWHTWAVNEFQIHNIERALKILRKALTVPPSYESIIDRFKSENRRLPSQTILFTSKRLWNYYIDLLESIPTIDANDVIRAYDTLMTLKLITPVGILNYATFLKQNNNLHGSLQVYEKGINMFPPEICYELWTLLLDEVMEPAHQATKERIRELFEQCLQQLGNTDININSIYVKYSDFEIHNKLFSRAIDLLMSGARRPYTNKEQLKQRVDLWESAISKCEEFLGPDSLRQLLSECIQELPNSKAITYVLKFTKLEMSLSDYTRARELLQYGAQLLPPIKNEELWGLWEQFELEHGDKSYYKEMLLLKQKLEKEMKVDTEEVSKGQGNVQFVASSVKNQEAKTNPDEIEIDI.

HAT repeat units follow at residues 7–38 (YILDDSDIAFEYELQKSPSVEVWQRYIAHWEA), 46–77 (RSARHILWLYERMVTQFPTLTVWEQYIGWFRR), 313–348 (ADFDKMEKVLTKALSETVKTNEFIAIYTYHVNFEQA), 414–456 (EDFD…VYWS), 458–494 (KSYEEARTIYESATKVPFPDLQDLEIVWHTWAVNEFQ), 517–551 (SIIDRFKSENRRLPSQTILFTSKRLWNYYIDLLES), 589–623 (NNLHGSLQVYEKGINMFPPEICYELWTLLLDEVME), 628–664 (ATKERIRELFEQCLQQLGNTDININSIYVKYSDFEIH), 707–741 (LGPDSLRQLLSECIQELPNSKAITYVLKFTKLEMS), and 743–777 (SDYTRARELLQYGAQLLPPIKNEELWGLWEQFELE).

The protein belongs to the crooked-neck family. In terms of assembly, associated with the spliceosome.

It localises to the nucleus. In terms of biological role, involved in pre-mRNA splicing and cell cycle progression. This chain is Pre-mRNA-splicing factor SYF1 (SYF1), found in Candida glabrata (strain ATCC 2001 / BCRC 20586 / JCM 3761 / NBRC 0622 / NRRL Y-65 / CBS 138) (Yeast).